Here is a 100-residue protein sequence, read N- to C-terminus: Large ribosomal subunit protein bL21 (100 aa).

The protein belongs to the bacterial ribosomal protein bL21 family. In terms of assembly, part of the 50S ribosomal subunit. Contacts protein L20.

In terms of biological role, this protein binds to 23S rRNA in the presence of protein L20. In Mycoplasma mycoides subsp. mycoides SC (strain CCUG 32753 / NCTC 10114 / PG1), this protein is Large ribosomal subunit protein bL21.